The following is a 388-amino-acid chain: MNTSQLREKFKEVFGVEADHTFFSPGRINLIGEHTDYNGGNVLPVAITLGTYGAARKRDDKVLRFFSANFEEKGIIEVPLENLRFENEHNWTNYPKGVLHFLQEAGHTIDSGMDIYIYGNIPNGSGLSSSSSLELLIGVIVEKLYDLKLERLDLVKIGKQTENDFIGVNSGIMDQFAIGMGADQCAIYLDTNTLKYDLVPLDLKDNVVVIMNTNKRRELSDSKYNERRAECETAVSELQEKLDIQTLGELDLWTFDAYSYLIKDENRIKRARHAVLENQRTLQARKALEAGELEGFGRLMNASHVSLKYDYEVTGLELDTLAHTAWEQEGVLGARMTGAGFGGCAIALVNKDKVEDFKKAVGQRYEEVVGYAPSFYIAEVTGGSRVLD.

Residue 33 to 36 (EHTD) participates in substrate binding. ATP is bound by residues Ser-67 and 124–130 (GSGLSSS). Residues Ser-130 and Glu-162 each coordinate Mg(2+). The active-site Proton acceptor is the Asp-174. Tyr-224 provides a ligand contact to substrate.

The protein belongs to the GHMP kinase family. GalK subfamily.

It is found in the cytoplasm. The enzyme catalyses alpha-D-galactose + ATP = alpha-D-galactose 1-phosphate + ADP + H(+). It functions in the pathway carbohydrate metabolism; galactose metabolism. Its function is as follows. Catalyzes the transfer of the gamma-phosphate of ATP to D-galactose to form alpha-D-galactose-1-phosphate (Gal-1-P). The chain is Galactokinase from Streptococcus thermophilus (strain ATCC BAA-491 / LMD-9).